The following is a 308-amino-acid chain: Tyrosine recombinase XerD (308 aa).

The Core-binding (CB) domain occupies 13–97 (PSSTEAIQRF…VFKRFFQWAL (85 aa)). Residues 118–302 (RVPKTLSEAQ…ARERLRTLHA (185 aa)) form the Tyr recombinase domain. Catalysis depends on residues Arg-158, Lys-183, His-254, Arg-257, and His-280. The active-site O-(3'-phospho-DNA)-tyrosine intermediate is the Tyr-289.

Belongs to the 'phage' integrase family. XerD subfamily. In terms of assembly, forms a cyclic heterotetrameric complex composed of two molecules of XerC and two molecules of XerD.

The protein resides in the cytoplasm. Its function is as follows. Site-specific tyrosine recombinase, which acts by catalyzing the cutting and rejoining of the recombining DNA molecules. The XerC-XerD complex is essential to convert dimers of the bacterial chromosome into monomers to permit their segregation at cell division. It also contributes to the segregational stability of plasmids. In Ralstonia nicotianae (strain ATCC BAA-1114 / GMI1000) (Ralstonia solanacearum), this protein is Tyrosine recombinase XerD.